The sequence spans 230 residues: MYELMENKQRKFWFYVRKGIFQVLLQLVLAMMTVWDFAGQNNTGTSYNKLYFYTSFLLVLYTGLKQILEYMFSICSEEVVFKKQFNNSRSRDILMSFDMLNSPSGHYIVTTKRIFKLRYSKSNLFIKIDKLCWFLGIDSPVLIPFNIIEKLGNIKDNLTTNNEDIYLNVTLTNLHKYQNDENDTEEDSEDIEKNSDPKENSDIDSLIPKVIETETDLNIKELQSELFRKV.

A helical membrane pass occupies residues 19 to 39 (GIFQVLLQLVLAMMTVWDFAG). Residue asparagine 41 is glycosylated (N-linked (GlcNAc...) asparagine; by host). The helical transmembrane segment at 55–75 (SFLLVLYTGLKQILEYMFSIC) threads the bilayer. 4 N-linked (GlcNAc...) asparagine; by host glycosylation sites follow: asparagine 86, asparagine 157, asparagine 168, and asparagine 182. Residues 172-196 (TNLHKYQNDENDTEEDSEDIEKNSD) are a coiled coil. The tract at residues 178-205 (QNDENDTEEDSEDIEKNSDPKENSDIDS) is disordered. The span at 180–190 (DENDTEEDSED) shows a compositional bias: acidic residues. The span at 191–201 (IEKNSDPKENS) shows a compositional bias: basic and acidic residues.

It is found in the membrane. This is an uncharacterized protein from Acanthamoeba polyphaga mimivirus (APMV).